The sequence spans 308 residues: Cell division protein FtsX (308 aa).

Residues 1 to 24 (MISRFFRHLFEALKSLKRNGWMTV) are Extracellular-facing. The helical transmembrane segment at 25–45 (AAVSSVMITLTLVAIFASVIF) threads the bilayer. At 46 to 178 (NTAKLATDIE…NTERLFKLAS (133 aa)) the chain is on the cytoplasmic side. A helical membrane pass occupies residues 179 to 199 (FIRVWGLGIAALLIFIAAFLI). Residues 200–236 (SNTIRITIISRSREIQIMRLVGAKNSYIRGPFLLEGA) are Extracellular-facing. A helical membrane pass occupies residues 237 to 257 (FIGLLGAIAPSVLVFIVYQIV). Residues 258–276 (YQSVNKSLVGQNLSMISPD) are Cytoplasmic-facing. Residues 277–297 (LFSPLMIALLFVIGVFIGSLG) form a helical membrane-spanning segment. At 298-308 (SGISMRRFLKI) the chain is on the extracellular side.

This sequence belongs to the ABC-4 integral membrane protein family. FtsX subfamily. As to quaternary structure, interacts with FtsE. Interacts (via large extracellular loop) with PcsB (via N-terminal coiled coil domain). This interaction directs PcsB to equatorial and septal sites of dividing cells.

It localises to the cell membrane. Part of the ABC transporter FtsEX involved in asymmetric cellular division facilitating the initiation of sporulation. Required in maintaining normal growth and cellular morphology. In Streptococcus pneumoniae (strain ATCC BAA-255 / R6), this protein is Cell division protein FtsX.